Consider the following 403-residue polypeptide: Leu/Ile/Val-binding protein homolog 8 (403 aa).

An N-terminal signal peptide occupies residues 1-26 (MRLSRLLIGASLGVALSSTVFTAALA).

The protein belongs to the leucine-binding protein family.

Component of an amino-acid transport system. The protein is Leu/Ile/Val-binding protein homolog 8 of Brucella abortus (strain 2308).